The primary structure comprises 549 residues: MKNINPTQTSAWQALQKHYDEMKDVTIAELFANDSDRFAKFSATFDDLMLVDFSKNRITEETLAKLQDLAKETDLAGAIKSMFSGEKINRTEDRAVLHVALRNRSNTPIIVDGKDVMPEVNAVLEKMKTFSQAIISGQWKGYTGKAITDVVNIGIGGSDLGPFMVTEVLRPYKNHLTMHFVSNVDGTHIAEVLKKVNPETTLFLVASKTFTTQETMTNAHSARDWFLKTAGDEKHVAKHFAALSTNAKAVGEFGIDTANMFEFWDWVGGRYSLWSAIGLSIILSVGFDNFVELLSGAHAMDKHFSTTPAEKNLPILLALIGIWYNNFFGAETEAILPYDQYMHRFAAYFQQGNMESNGKYVDRNGNAVDYQTGPIIWGEPGTNGQHAFYQLIHQGTKMVPCDFIAPAITHNPLSDHHQKLLSNFFAQTEALAFGKSREVVEQEYRDQGKDPAQLEHVVPFKVFEGNRPTNSILLREITPFSLGALIALYEHKIFTQGVILNIFTFDQWGVELGKQLANRILPELGDDKAISSHDSSTNGLINRYKAWRA.

E355 functions as the Proton donor in the catalytic mechanism. Active-site residues include H386 and K514.

This sequence belongs to the GPI family.

The protein resides in the cytoplasm. The catalysed reaction is alpha-D-glucose 6-phosphate = beta-D-fructose 6-phosphate. Its pathway is carbohydrate biosynthesis; gluconeogenesis. It functions in the pathway carbohydrate degradation; glycolysis; D-glyceraldehyde 3-phosphate and glycerone phosphate from D-glucose: step 2/4. Functionally, catalyzes the reversible isomerization of glucose-6-phosphate to fructose-6-phosphate. This Salmonella paratyphi A (strain AKU_12601) protein is Glucose-6-phosphate isomerase.